The primary structure comprises 488 residues: Probable malate:quinone oxidoreductase (488 aa).

This sequence belongs to the MQO family. It depends on FAD as a cofactor.

The enzyme catalyses (S)-malate + a quinone = a quinol + oxaloacetate. It functions in the pathway carbohydrate metabolism; tricarboxylic acid cycle; oxaloacetate from (S)-malate (quinone route): step 1/1. The protein is Probable malate:quinone oxidoreductase of Neisseria meningitidis serogroup A / serotype 4A (strain DSM 15465 / Z2491).